The primary structure comprises 446 residues: Methylenetetrahydrofolate--tRNA-(uracil-5-)-methyltransferase TrmFO (446 aa).

Position 11–16 (11–16) interacts with FAD; the sequence is GGGLAG.

The protein belongs to the MnmG family. TrmFO subfamily. Requires FAD as cofactor.

It is found in the cytoplasm. The catalysed reaction is uridine(54) in tRNA + (6R)-5,10-methylene-5,6,7,8-tetrahydrofolate + NADH + H(+) = 5-methyluridine(54) in tRNA + (6S)-5,6,7,8-tetrahydrofolate + NAD(+). It catalyses the reaction uridine(54) in tRNA + (6R)-5,10-methylene-5,6,7,8-tetrahydrofolate + NADPH + H(+) = 5-methyluridine(54) in tRNA + (6S)-5,6,7,8-tetrahydrofolate + NADP(+). In terms of biological role, catalyzes the folate-dependent formation of 5-methyl-uridine at position 54 (M-5-U54) in all tRNAs. In Oleidesulfovibrio alaskensis (strain ATCC BAA-1058 / DSM 17464 / G20) (Desulfovibrio alaskensis), this protein is Methylenetetrahydrofolate--tRNA-(uracil-5-)-methyltransferase TrmFO.